Here is a 161-residue protein sequence, read N- to C-terminus: Large ribosomal subunit protein mL50 (161 aa).

Residues 27 to 51 are disordered; sequence WGGHSKKEEKEVEENSIIPQEKKEP.

Belongs to the mitochondrion-specific ribosomal protein mL50 family. In terms of assembly, component of the mitochondrial ribosome large subunit (39S) which comprises a 16S rRNA and about 50 distinct proteins.

The protein resides in the mitochondrion. The polypeptide is Large ribosomal subunit protein mL50 (MRPL50) (Gallus gallus (Chicken)).